A 262-amino-acid polypeptide reads, in one-letter code: Carbonic anhydrase 13 (262 aa).

An Alpha-carbonic anhydrase domain is found at 4-261 (LSWGYGEHNG…LKGRRVRASF (258 aa)). The active-site Proton donor/acceptor is histidine 65. 3 residues coordinate Zn(2+): histidine 95, histidine 97, and histidine 120. 200 to 201 (TV) serves as a coordination point for substrate.

Belongs to the alpha-carbonic anhydrase family. The cofactor is Zn(2+). In terms of tissue distribution, expressed in spleen, lung, kidney, heart, brain, skeletal muscle and testis.

The catalysed reaction is hydrogencarbonate + H(+) = CO2 + H2O. Its activity is regulated as follows. Inhibited by coumarins, sulfonamide derivatives such as acetazolamide (AZA) and Foscarnet (phosphonoformate trisodium salt). Functionally, reversible hydration of carbon dioxide. In Mus musculus (Mouse), this protein is Carbonic anhydrase 13 (Ca13).